Consider the following 91-residue polypeptide: Small ribosomal subunit protein bS18 (91 aa).

It belongs to the bacterial ribosomal protein bS18 family. In terms of assembly, part of the 30S ribosomal subunit. Forms a tight heterodimer with protein bS6.

Its function is as follows. Binds as a heterodimer with protein bS6 to the central domain of the 16S rRNA, where it helps stabilize the platform of the 30S subunit. In Wolbachia sp. subsp. Brugia malayi (strain TRS), this protein is Small ribosomal subunit protein bS18.